The chain runs to 219 residues: Uracil-DNA glycosylase (219 aa).

Aspartate 62 functions as the Proton acceptor in the catalytic mechanism.

Belongs to the uracil-DNA glycosylase (UDG) superfamily. UNG family.

The protein localises to the cytoplasm. It catalyses the reaction Hydrolyzes single-stranded DNA or mismatched double-stranded DNA and polynucleotides, releasing free uracil.. In terms of biological role, excises uracil residues from the DNA which can arise as a result of misincorporation of dUMP residues by DNA polymerase or due to deamination of cytosine. This chain is Uracil-DNA glycosylase, found in Lactococcus lactis subsp. cremoris (strain MG1363).